A 275-amino-acid chain; its full sequence is Formamidopyrimidine-DNA glycosylase (275 aa).

Catalysis depends on Pro2, which acts as the Schiff-base intermediate with DNA. The active-site Proton donor is the Glu3. Catalysis depends on Lys58, which acts as the Proton donor; for beta-elimination activity. DNA is bound by residues His91, Arg109, and Arg154. The FPG-type zinc finger occupies 240 to 274; sequence AVYERAGLPCRVCGTPIRRLVQGQRATYYCPSCQK. The active-site Proton donor; for delta-elimination activity is Arg264.

Belongs to the FPG family. As to quaternary structure, monomer. Requires Zn(2+) as cofactor.

It catalyses the reaction Hydrolysis of DNA containing ring-opened 7-methylguanine residues, releasing 2,6-diamino-4-hydroxy-5-(N-methyl)formamidopyrimidine.. The enzyme catalyses 2'-deoxyribonucleotide-(2'-deoxyribose 5'-phosphate)-2'-deoxyribonucleotide-DNA = a 3'-end 2'-deoxyribonucleotide-(2,3-dehydro-2,3-deoxyribose 5'-phosphate)-DNA + a 5'-end 5'-phospho-2'-deoxyribonucleoside-DNA + H(+). Functionally, involved in base excision repair of DNA damaged by oxidation or by mutagenic agents. Acts as a DNA glycosylase that recognizes and removes damaged bases. Has a preference for oxidized purines, such as 7,8-dihydro-8-oxoguanine (8-oxoG). Has AP (apurinic/apyrimidinic) lyase activity and introduces nicks in the DNA strand. Cleaves the DNA backbone by beta-delta elimination to generate a single-strand break at the site of the removed base with both 3'- and 5'-phosphates. The polypeptide is Formamidopyrimidine-DNA glycosylase (Bordetella petrii (strain ATCC BAA-461 / DSM 12804 / CCUG 43448)).